We begin with the raw amino-acid sequence, 158 residues long: Ribonucleases P/MRP protein subunit POP6 (158 aa).

A coiled-coil region spans residues 51–71 (KNDNIKKSVNKLDKQINMADR).

Component of nuclear RNase P and RNase MRP complexes. RNase P consists of an RNA moiety and at least 9 protein subunits including POP1, POP3, POP4, POP5, POP6, POP7, POP8, RPP1 and RPR2. RNase MRP complex consists of an RNA moiety and at least 10 protein subunits including POP1, POP3, POP4, POP5, POP6, POP7, POP8, RMP1, RPP1 and SNM1, many of which are shared with the RNase P complex.

The protein localises to the nucleus. The catalysed reaction is Endonucleolytic cleavage of RNA, removing 5'-extranucleotides from tRNA precursor.. Its function is as follows. Component of ribonuclease P, a protein complex that generates mature tRNA molecules by cleaving their 5'-ends. Also a component of RNase MRP, which cleaves pre-rRNA sequences. In Saccharomyces cerevisiae (strain ATCC 204508 / S288c) (Baker's yeast), this protein is Ribonucleases P/MRP protein subunit POP6 (POP6).